A 185-amino-acid chain; its full sequence is Elongation factor P (185 aa).

This sequence belongs to the elongation factor P family.

The protein localises to the cytoplasm. It functions in the pathway protein biosynthesis; polypeptide chain elongation. In terms of biological role, involved in peptide bond synthesis. Stimulates efficient translation and peptide-bond synthesis on native or reconstituted 70S ribosomes in vitro. Probably functions indirectly by altering the affinity of the ribosome for aminoacyl-tRNA, thus increasing their reactivity as acceptors for peptidyl transferase. This Nostoc sp. (strain PCC 7120 / SAG 25.82 / UTEX 2576) protein is Elongation factor P (efp).